The primary structure comprises 345 residues: Homeobox protein DBX1 (345 aa).

Disordered stretches follow at residues 55-103 and 241-345; these read PRGS…VSPA and KERE…ITVS. Positions 182 to 241 form a DNA-binding region, homeobox; it reads GMLRRAVFSDVQRKALEKMFQKQKYISKPDRKKLAAKLGLKDSQVKIWFQNRRMKWRNSK. Over residues 300–309 the composition is skewed to basic and acidic residues; the sequence is DPRHLRDPRL. Residues 330–345 are compositionally biased toward acidic residues; sequence SDSEDDEEGEEEITVS.

The protein belongs to the H2.0 homeobox family.

It is found in the nucleus. Could have a role in patterning the central nervous system during embryogenesis. Has a key role in regulating the distinct phenotypic features that distinguish two major classes of ventral interneurons, V0 and V1 neurons. Regulates the transcription factor profile, neurotransmitter phenotype, intraspinal migratory path and axonal trajectory of V0 neurons, features that differentiate them from an adjacent set of V1 neurons. The polypeptide is Homeobox protein DBX1 (DBX1) (Bos taurus (Bovine)).